Here is a 129-residue protein sequence, read N- to C-terminus: uncharacterized protein (129 aa).

This is an uncharacterized protein from Streptococcus pyogenes serotype M6 (strain ATCC BAA-946 / MGAS10394).